The primary structure comprises 233 residues: MLTKKQLDLLEFIHKRVQRDGVPPSFDEMKEALDLRSKSGIHRLITALEERGFIRRLAHRARAIEIVKLPETLGGAARGGFTPRVIEGDKPDAPLPAGAQAVSSADAVALPLVGRIAAGLPIEAINQNSASVAVPGQMLSGKGDHYALEVKGDSMIDAGINDGDVVVIRETSVADNGDIVVALIEDHEATLKRYMRKGSSIALEAANPAYETRVFTEDKVKVQGKLVGLIRTY.

Positions 26 to 46 (FDEMKEALDLRSKSGIHRLIT) form a DNA-binding region, H-T-H motif. Residues Ser-154 and Lys-192 each act as for autocatalytic cleavage activity in the active site.

This sequence belongs to the peptidase S24 family. As to quaternary structure, homodimer.

The enzyme catalyses Hydrolysis of Ala-|-Gly bond in repressor LexA.. Represses a number of genes involved in the response to DNA damage (SOS response), including recA and lexA. In the presence of single-stranded DNA, RecA interacts with LexA causing an autocatalytic cleavage which disrupts the DNA-binding part of LexA, leading to derepression of the SOS regulon and eventually DNA repair. This Roseobacter denitrificans (strain ATCC 33942 / OCh 114) (Erythrobacter sp. (strain OCh 114)) protein is LexA repressor.